Consider the following 277-residue polypeptide: Elongation factor Ts (277 aa).

Residues T79–V82 are involved in Mg(2+) ion dislocation from EF-Tu.

It belongs to the EF-Ts family.

The protein resides in the cytoplasm. Its function is as follows. Associates with the EF-Tu.GDP complex and induces the exchange of GDP to GTP. It remains bound to the aminoacyl-tRNA.EF-Tu.GTP complex up to the GTP hydrolysis stage on the ribosome. The sequence is that of Elongation factor Ts from Phytoplasma australiense.